Here is a 191-residue protein sequence, read N- to C-terminus: Fe/S biogenesis protein NfuA (191 aa).

[4Fe-4S] cluster-binding residues include cysteine 149 and cysteine 152.

Belongs to the NfuA family. As to quaternary structure, homodimer. [4Fe-4S] cluster serves as cofactor.

Its function is as follows. Involved in iron-sulfur cluster biogenesis. Binds a 4Fe-4S cluster, can transfer this cluster to apoproteins, and thereby intervenes in the maturation of Fe/S proteins. Could also act as a scaffold/chaperone for damaged Fe/S proteins. The polypeptide is Fe/S biogenesis protein NfuA (Yersinia enterocolitica serotype O:8 / biotype 1B (strain NCTC 13174 / 8081)).